A 487-amino-acid polypeptide reads, in one-letter code: Protein nucleotidyltransferase YdiU (487 aa).

ATP contacts are provided by Gly-90, Gly-92, Arg-93, Lys-113, Asp-125, Gly-126, Arg-176, and Arg-183. The active-site Proton acceptor is Asp-252. Mg(2+)-binding residues include Asn-253 and Asp-262. Asp-262 lines the ATP pocket.

The protein belongs to the SELO family. The cofactor is Mg(2+). Mn(2+) serves as cofactor.

It catalyses the reaction L-seryl-[protein] + ATP = 3-O-(5'-adenylyl)-L-seryl-[protein] + diphosphate. The catalysed reaction is L-threonyl-[protein] + ATP = 3-O-(5'-adenylyl)-L-threonyl-[protein] + diphosphate. It carries out the reaction L-tyrosyl-[protein] + ATP = O-(5'-adenylyl)-L-tyrosyl-[protein] + diphosphate. The enzyme catalyses L-histidyl-[protein] + UTP = N(tele)-(5'-uridylyl)-L-histidyl-[protein] + diphosphate. It catalyses the reaction L-seryl-[protein] + UTP = O-(5'-uridylyl)-L-seryl-[protein] + diphosphate. The catalysed reaction is L-tyrosyl-[protein] + UTP = O-(5'-uridylyl)-L-tyrosyl-[protein] + diphosphate. Functionally, nucleotidyltransferase involved in the post-translational modification of proteins. It can catalyze the addition of adenosine monophosphate (AMP) or uridine monophosphate (UMP) to a protein, resulting in modifications known as AMPylation and UMPylation. The sequence is that of Protein nucleotidyltransferase YdiU from Pseudomonas fluorescens (strain Pf0-1).